Consider the following 214-residue polypeptide: Proteasome subunit beta (214 aa).

A propeptide spans Met1 to Gly11 (removed in mature form; by autocatalysis). Thr12 serves as the catalytic Nucleophile.

This sequence belongs to the peptidase T1B family. As to quaternary structure, the 20S proteasome core is composed of 14 alpha and 14 beta subunits that assemble into four stacked heptameric rings, resulting in a barrel-shaped structure. The two inner rings, each composed of seven catalytic beta subunits, are sandwiched by two outer rings, each composed of seven alpha subunits. The catalytic chamber with the active sites is on the inside of the barrel. Has a gated structure, the ends of the cylinder being occluded by the N-termini of the alpha-subunits. Is capped at one or both ends by the proteasome regulatory ATPase, PAN.

It is found in the cytoplasm. It catalyses the reaction Cleavage of peptide bonds with very broad specificity.. Its activity is regulated as follows. The formation of the proteasomal ATPase PAN-20S proteasome complex, via the docking of the C-termini of PAN into the intersubunit pockets in the alpha-rings, triggers opening of the gate for substrate entry. Interconversion between the open-gate and close-gate conformations leads to a dynamic regulation of the 20S proteasome proteolysis activity. Functionally, component of the proteasome core, a large protease complex with broad specificity involved in protein degradation. This chain is Proteasome subunit beta, found in Methanoculleus marisnigri (strain ATCC 35101 / DSM 1498 / JR1).